The sequence spans 883 residues: Phosphoenolpyruvate carboxylase (883 aa).

Residues His138 and Lys546 contribute to the active site.

The protein belongs to the PEPCase type 1 family. As to quaternary structure, homotetramer. Mg(2+) is required as a cofactor.

The catalysed reaction is oxaloacetate + phosphate = phosphoenolpyruvate + hydrogencarbonate. With respect to regulation, the enzyme has distinct binding sites for each of the allosteric effectors such as acetyl-CoA, fructose 1,6-bisphosphate, guanosine 3'-diphosphate 5'-diphosphate, long chain fatty acids, and L-aspartate. Forms oxaloacetate, a four-carbon dicarboxylic acid source for the tricarboxylic acid cycle. The chain is Phosphoenolpyruvate carboxylase (ppc) from Salmonella typhi.